The following is a 242-amino-acid chain: DNA repair protein RecO (242 aa).

The protein belongs to the RecO family. In terms of assembly, monomer.

Functionally, involved in DNA repair and RecF pathway recombination. In Salmonella gallinarum (strain 287/91 / NCTC 13346), this protein is DNA repair protein RecO.